A 397-amino-acid chain; its full sequence is Elongation factor Tu (397 aa).

The 197-residue stretch at 10–206 (KPHCNIGTIG…AVDEYIPQPE (197 aa)) folds into the tr-type G domain. A G1 region spans residues 19–26 (GHIDHGKT). 19-26 (GHIDHGKT) is a GTP binding site. Mg(2+) is bound at residue threonine 26. A G2 region spans residues 62 to 66 (GITIS). The interval 83–86 (DCPG) is G3. Residues 83 to 87 (DCPGH) and 138 to 141 (NKCD) contribute to the GTP site. The segment at 138 to 141 (NKCD) is G4. The tract at residues 176–178 (SAF) is G5.

This sequence belongs to the TRAFAC class translation factor GTPase superfamily. Classic translation factor GTPase family. EF-Tu/EF-1A subfamily. Monomer.

The protein resides in the cytoplasm. The catalysed reaction is GTP + H2O = GDP + phosphate + H(+). GTP hydrolase that promotes the GTP-dependent binding of aminoacyl-tRNA to the A-site of ribosomes during protein biosynthesis. This chain is Elongation factor Tu, found in Cutibacterium acnes (strain DSM 16379 / KPA171202) (Propionibacterium acnes).